The chain runs to 263 residues: Ribosomal RNA small subunit methyltransferase J (263 aa).

Residues 108-109 (RD), 124-125 (ER), and aspartate 178 each bind S-adenosyl-L-methionine.

It belongs to the methyltransferase superfamily. RsmJ family.

The protein resides in the cytoplasm. The catalysed reaction is guanosine(1516) in 16S rRNA + S-adenosyl-L-methionine = N(2)-methylguanosine(1516) in 16S rRNA + S-adenosyl-L-homocysteine + H(+). In terms of biological role, specifically methylates the guanosine in position 1516 of 16S rRNA. In Idiomarina loihiensis (strain ATCC BAA-735 / DSM 15497 / L2-TR), this protein is Ribosomal RNA small subunit methyltransferase J.